Consider the following 451-residue polypeptide: Methylenetetrahydrofolate--tRNA-(uracil-5-)-methyltransferase TrmFO (451 aa).

10-15 contributes to the FAD binding site; it reads GGGLAG.

This sequence belongs to the MnmG family. TrmFO subfamily. Requires FAD as cofactor.

It is found in the cytoplasm. The catalysed reaction is uridine(54) in tRNA + (6R)-5,10-methylene-5,6,7,8-tetrahydrofolate + NADH + H(+) = 5-methyluridine(54) in tRNA + (6S)-5,6,7,8-tetrahydrofolate + NAD(+). It catalyses the reaction uridine(54) in tRNA + (6R)-5,10-methylene-5,6,7,8-tetrahydrofolate + NADPH + H(+) = 5-methyluridine(54) in tRNA + (6S)-5,6,7,8-tetrahydrofolate + NADP(+). Its function is as follows. Catalyzes the folate-dependent formation of 5-methyl-uridine at position 54 (M-5-U54) in all tRNAs. The protein is Methylenetetrahydrofolate--tRNA-(uracil-5-)-methyltransferase TrmFO of Anaeromyxobacter sp. (strain Fw109-5).